A 637-amino-acid chain; its full sequence is 1-deoxy-D-xylulose-5-phosphate synthase (637 aa).

Thiamine diphosphate is bound by residues histidine 71 and 112-114; that span reads SHA. Aspartate 144 contributes to the Mg(2+) binding site. Thiamine diphosphate-binding positions include 145–146, asparagine 173, tyrosine 284, and glutamate 365; that span reads GA. A Mg(2+)-binding site is contributed by asparagine 173.

Belongs to the transketolase family. DXPS subfamily. Homodimer. The cofactor is Mg(2+). Thiamine diphosphate serves as cofactor.

It carries out the reaction D-glyceraldehyde 3-phosphate + pyruvate + H(+) = 1-deoxy-D-xylulose 5-phosphate + CO2. It participates in metabolic intermediate biosynthesis; 1-deoxy-D-xylulose 5-phosphate biosynthesis; 1-deoxy-D-xylulose 5-phosphate from D-glyceraldehyde 3-phosphate and pyruvate: step 1/1. Functionally, catalyzes the acyloin condensation reaction between C atoms 2 and 3 of pyruvate and glyceraldehyde 3-phosphate to yield 1-deoxy-D-xylulose-5-phosphate (DXP). This chain is 1-deoxy-D-xylulose-5-phosphate synthase, found in Mycolicibacterium vanbaalenii (strain DSM 7251 / JCM 13017 / BCRC 16820 / KCTC 9966 / NRRL B-24157 / PYR-1) (Mycobacterium vanbaalenii).